A 1544-amino-acid chain; its full sequence is MSTIEIVSTVAEYTEIHSPVSSKFLLPSARDSSSSISLFSAIFWFWSWLFFKIMNIFLYYIPNIIVNLFSVNFQITLSLSSIVITLTGIISFCFLIVRYKYLTRYSKTTKSTDKPKSSNKNIDLVGSIKKNKRGDSKSTSNYLDEFLSAIKVFGYLERPVFHELTRNMTTQKLSSEEILYLDEKLGFSIVVEGTIQVYTKVNSVNSSTTSNSDDNELNFEKDDLLTIGDQCYQLLNEVKSGSPLSSLMSTLDLFKPVDPDTMSNRLFSPFELDSNPASNPLSPDNTGSKSFDPLSSGNFNDTSLSSSDRNYPNIVARPKPIEDSNNLNTATIAIIPYSAFQKVQSKYPKATSHIVTMVITRLYKITMNTIHSYLGLTREIIRSEIQLNESEGAKDSLPSYLYDGVIEKFYGDKNNETLLNKTAESPSVSINKTSSSSSSLPKKSTTSLRPLNRNQSSRYVVLDSRSKSTHPGDLLSSVPLSRRSDYYQTHTTIQPDPEEVRSQSRTKMTSPVLPKRQISSNGGPTLKGHSSSTTKFENIRDRTFSDEREETEETSLRIAIIENIFKILGINEVSNMIGSMSDLNSRSSSVNSSVVGLPSLMNNGNESKYPNGIFDFNTGKVRYDSISSFPTSLNKGANNNLKFYDTVNQSQLKDMDHENDKSSQVDINNLMFKRKSIPIQSFESNFYDVKNEFSKHLNIKYFGPNTTLVEQESFNSGLYYVIDGTLDVFYKPASKESENLTPMNKKKLYTVKSGGLAGYLSSIIGVRSLVSISTPGDKGVIVAHIPKNEFSKLLDKFYFLQLPVASKLKSLLSSQILTIDYALEWCHIPAGDVLCSQGDLANGFHIVLSGRFRVVRYNNNKSSEVNPDDNTDIHDYNNNLIDESLSYKSRKKKDDITILGEYGHGETIGEVEVLTASRRTNSLIAVRDSETARIPRTLFEMLSLRNPSIMVKVSRIVANKMAKKDNIGIPSTISSNVPLIVTNTDSHISNDYKTITILPTVSGLPVRDFADKLVSALKNIGRNVIALDQASTLTHLGRHAFDERLAQLKLSGYFAYLEEEYQTIVYVCDTPLKSNWTSTCISQGDCILLLADADDDDVATNIGEYERLLMKLKTTARTDLCLIHADKYVEPGSTSVWLKNRIWVQGHHHIQMEIARDNSVQQGQKTSIIKNIAAKISSRTNTNIKSRLENVKTKAILSLNKFNNRLSRRTHSYKTVQAHKNDFLRLARILSNESVGLVLGGGGSRGISHVGVVMALEKHGIPIDLIGGTSIGSFVGGLYAKDYNIVSIYGRAKRFAKRVSSWWRMVLDLTYPVTSYITGYEFNRGIWKIFGSSEIEDFWIRYFCNSTNITNSTMDIHESGFSWRFIRASMSLAGLLPPITYGGSMLLDGGYLDNLPVMEMKKKGAKYIIAVDVGSVDDRTPMNYGDTLSGFWVLFNRWNPFSRHPNVPNMMDIQLRLAYVASVNALELAKKTPGVIYLRPPIDDYATLDFAKFDEIYHVGMAYADNLLTRWEQTGKIPPIAGMIDRSRIRNGEERKSLYRRSSI.

Residues 1–37 are Cytoplasmic-facing; that stretch reads MSTIEIVSTVAEYTEIHSPVSSKFLLPSARDSSSSIS. A helical transmembrane segment spans residues 38-58; it reads LFSAIFWFWSWLFFKIMNIFL. At 59–76 the chain is on the lumenal side; the sequence is YYIPNIIVNLFSVNFQIT. Residues 77–97 form a helical membrane-spanning segment; the sequence is LSLSSIVITLTGIISFCFLIV. Topologically, residues 98 to 1544 are cytoplasmic; it reads RYKYLTRYSK…RKSLYRRSSI (1447 aa). 2 disordered regions span residues 265–312 and 424–552; these read RLFS…RNYP and ESPS…EETE. The span at 275–310 shows a compositional bias: polar residues; the sequence is NPASNPLSPDNTGSKSFDPLSSGNFNDTSLSSSDRN. The span at 425–447 shows a compositional bias: low complexity; the sequence is SPSVSINKTSSSSSSLPKKSTTS. 2 stretches are compositionally biased toward polar residues: residues 448 to 458 and 517 to 536; these read LRPLNRNQSSR and QISSNGGPTLKGHSSSTTKF. Residues 537–546 are compositionally biased toward basic and acidic residues; the sequence is ENIRDRTFSD. A nucleoside 3',5'-cyclic phosphate-binding positions include 681-811 and 807-960; these read SFES…LKSL and KLKS…VANK. One can recognise a PNPLA domain in the interval 1237–1401; the sequence is LVLGGGGSRG…LDNLPVMEMK (165 aa). Residues 1241 to 1246 carry the GXGXXG motif; the sequence is GGGSRG. The short motif at 1268–1272 is the GXSXG element; it reads GTSIG. Serine 1270 acts as the Nucleophile in catalysis. Aspartate 1388 serves as the catalytic Proton acceptor. The DGA/G motif lies at 1388–1390; sequence DGG.

Belongs to the NTE family.

The protein resides in the endoplasmic reticulum membrane. The catalysed reaction is a 1-acyl-sn-glycero-3-phosphocholine + H2O = sn-glycerol 3-phosphocholine + a fatty acid + H(+). Inhibited by organophosphorus esters. In terms of biological role, intracellular phospholipase B that catalyzes the double deacylation of phosphatidylcholine (PC) to glycerophosphocholine (GroPCho). Plays an important role in membrane lipid homeostasis. Responsible for the rapid PC turnover in response to inositol, elevated temperatures, or when choline is present in the growth medium. The chain is Lysophospholipase NTE1 (NTE1) from Debaryomyces hansenii (strain ATCC 36239 / CBS 767 / BCRC 21394 / JCM 1990 / NBRC 0083 / IGC 2968) (Yeast).